A 948-amino-acid polypeptide reads, in one-letter code: Puromycin-sensitive aminopeptidase (948 aa).

Substrate contacts are provided by residues glutamate 206 and glycine 341 to asparagine 345. Zn(2+) is bound at residue histidine 377. The active-site Proton acceptor is the glutamate 378. Positions 381 and 400 each coordinate Zn(2+).

This sequence belongs to the peptidase M1 family. Zn(2+) is required as a cofactor. In terms of tissue distribution, expressed mainly in intestinal cells in the posterior part of the intestine and in amphid sensory neurons and nerve ring neurons. Expressed in neurons in the male tail. Expressed in mature spermatids (at protein level).

Its subcellular location is the cytoplasm. The protein localises to the cell cortex. It localises to the chromosome. It is found in the cytoskeleton. The protein resides in the spindle pole. The enzyme catalyses Release of an N-terminal amino acid, preferentially alanine, from a wide range of peptides, amides and arylamides.. Its activity is regulated as follows. Inhibited by chelating agent 1,10-phenanthroline, aminopeptidase inhibitors actinonin, amastatin, and leuhistin, and to a lesser extent by puromycin. Aminopeptidase. Required for the exit from meiosis, probably upstream of cyclin cyb-3. Involved in the establishment of the anterior-posterior polarity at the embryonic 1-cell stage by regulating the dynamics of sperm-donated centrosomes. Plays a role in oocyte maturation. Required for embryonic development. In Caenorhabditis elegans, this protein is Puromycin-sensitive aminopeptidase.